Here is a 437-residue protein sequence, read N- to C-terminus: Aromatic peroxidase fscJ (437 aa).

The first 19 residues, methionine 1 to alanine 19, serve as a signal peptide directing secretion. Residue cysteine 83 coordinates heme.

This sequence belongs to the chloroperoxidase family. Requires heme b as cofactor.

Its pathway is secondary metabolite biosynthesis. Functionally, aromatic peroxidase; part of the fragmented gene cluster that mediates the biosynthesis of fusarochromene, a tryptophan-derived metabolite closely related to a group of mycotoxins including fusarochromanone. The role of fscJ within the pathway has not been identified yet. The first step of the pathway is the epimerization of L-tryptophan to D-tryptophan in the presence of the NRPS-like tryptophan epimerase fscC. D-tryptophan is subsequently hydroxylated by the tryptophan 6-hydroxylase fscE to yield 6-hydroxytryptophan. The pyrrole ring undergoes cleavaged by the tryptophan 2,3-dioxygenase fscD and is finally converted to 4-hydroxykyrunenine by the hydrolase fscH. The NRPS-like oxidoreductase fscA reduces the carboxyl group to primary alcohol and the DMATS-type prenyltransferase fscG performs prenylation, followed by the formation of a chromene ring catalyzed by the oxidoreductase fscI, which leads to desacetylfusarochromene. Epoxidation by fscF and rearrangement reactions of chromene double bonds convert compound desacetylfusarochromene to fusarochromanones. Although specific acetyltransferases were not found near the fsc gene cluster, several predicted enzymes containing the N-acetyltransferase superfamily domain are present in the genome of F.equiseti. These predicted enzymes may have the potential to convert desacetylfusarochromene to fusarochromene. This is Aromatic peroxidase fscJ from Fusarium equiseti (Fusarium scirpi).